The primary structure comprises 180 residues: ATP synthase subunit delta (180 aa).

Belongs to the ATPase delta chain family. In terms of assembly, F-type ATPases have 2 components, F(1) - the catalytic core - and F(0) - the membrane proton channel. F(1) has five subunits: alpha(3), beta(3), gamma(1), delta(1), epsilon(1). F(0) has three main subunits: a(1), b(2) and c(10-14). The alpha and beta chains form an alternating ring which encloses part of the gamma chain. F(1) is attached to F(0) by a central stalk formed by the gamma and epsilon chains, while a peripheral stalk is formed by the delta and b chains.

The protein localises to the cell inner membrane. In terms of biological role, f(1)F(0) ATP synthase produces ATP from ADP in the presence of a proton or sodium gradient. F-type ATPases consist of two structural domains, F(1) containing the extramembraneous catalytic core and F(0) containing the membrane proton channel, linked together by a central stalk and a peripheral stalk. During catalysis, ATP synthesis in the catalytic domain of F(1) is coupled via a rotary mechanism of the central stalk subunits to proton translocation. Functionally, this protein is part of the stalk that links CF(0) to CF(1). It either transmits conformational changes from CF(0) to CF(1) or is implicated in proton conduction. The polypeptide is ATP synthase subunit delta (Legionella pneumophila (strain Paris)).